A 95-amino-acid polypeptide reads, in one-letter code: Alpha-conotoxin-like Cp20.5 (95 aa).

An N-terminal signal peptide occupies residues 1-24 (MPKLAVVLLVLLILPLSYFDAAGG). Residues 25-45 (QAVQGDRRGNGLARYLQRNGR) constitute a propeptide that is removed on maturation. The residue at position 50 (Glu50) is a 4-carboxyglutamate. The residue at position 56 (Pro56) is a 4-hydroxyproline. 4 disulfide bridges follow: Cys64–Cys73, Cys69–Cys81, Cys74–Cys91, and Cys79–Cys93.

Belongs to the conotoxin D superfamily. Hetero-, homo- or pseudo-homodimer (identical sequence, different post-translational modifications). Expressed by the venom duct.

The protein resides in the secreted. Alpha-conotoxins act on postsynaptic membranes, they bind to the nicotinic acetylcholine receptors (nAChR) and thus inhibit them. Through its two C-terminal domains, this homodimeric protein would bind to two nAChR allosteric sites, located outside the nAChR C-loop of the principal binding face and at the adjacent binding interface in a clockwise direction. This toxin specifically blocks mammalian neuronal nAChR of the alpha-7/CHRNA7, alpha-3-beta-2/CHRNA3-CHRNB2 and alpha-4-beta-2/CHRNA4-CHRNB2 subtypes. In Conus capitaneus (Captain cone), this protein is Alpha-conotoxin-like Cp20.5.